Reading from the N-terminus, the 141-residue chain is Nucleoside diphosphate kinase (141 aa).

ATP is bound by residues Lys11, Phe59, Arg87, Thr93, Arg104, and Asn114. His117 serves as the catalytic Pros-phosphohistidine intermediate.

Belongs to the NDK family. Homotetramer. The cofactor is Mg(2+).

It is found in the cytoplasm. It catalyses the reaction a 2'-deoxyribonucleoside 5'-diphosphate + ATP = a 2'-deoxyribonucleoside 5'-triphosphate + ADP. The enzyme catalyses a ribonucleoside 5'-diphosphate + ATP = a ribonucleoside 5'-triphosphate + ADP. Major role in the synthesis of nucleoside triphosphates other than ATP. The ATP gamma phosphate is transferred to the NDP beta phosphate via a ping-pong mechanism, using a phosphorylated active-site intermediate. This is Nucleoside diphosphate kinase from Mannheimia succiniciproducens (strain KCTC 0769BP / MBEL55E).